A 363-amino-acid chain; its full sequence is B3 domain-containing transcription factor LEC2 (363 aa).

A disordered region spans residues 1–27; that stretch reads MDNFLPFPSSNANSVQELSMDPNNNRS. Residues 8-27 show a composition bias toward polar residues; it reads PSSNANSVQELSMDPNNNRS. Residues 171–272 constitute a DNA-binding region (TF-B3); it reads CEKELKNSDV…NLYFAMNGNS (102 aa). The interval 331 to 351 is disordered; sequence QHHQATSSSMPPEDHAYVGSS.

The protein resides in the nucleus. In terms of biological role, transcription regulator that plays a central role in embryo development. Required for the maintenance of suspensor morphology, specification of cotyledon identity, progression through the maturation phase and suppression of premature germination. Ectopic expression is sufficient to promote somatic embryogenesis. The polypeptide is B3 domain-containing transcription factor LEC2 (LEC2) (Arabidopsis thaliana (Mouse-ear cress)).